Consider the following 439-residue polypeptide: UDP-N-acetylglucosamine--peptide N-acetylglucosaminyltransferase stabilizing protein GtfB (439 aa).

The protein belongs to the GtfB family. In terms of assembly, interacts with glycosyltransferase GtfA (Gtf2); probably forms a heterotetramer with 2 subunits each of GtfA and GtfB. Part of the accessory SecA2/SecY2 protein translocation apparatus.

It is found in the cell membrane. Its pathway is protein modification; protein glycosylation. Required for the polymorphic O-glycosylation of the serine-rich repeat protein Fap1. A stabilizing protein that is part of the accessory SecA2/SecY2 system specifically required to export Fap1, a serine-rich fimbrial adhesin encoded upstream in the same operon. The GtfA-GtfB (Gtf1-Gtf2 in this bacteria) complex adds GlcNAc from UDP-GlcNAc to Fap1, attaching the first sugar residue. Cannot use not UDP-Glc as substrate. Stabilizes the glycosylation activity of GtfA, causing it to partially localize to the cellular membrane where it is more protease resistant. This Streptococcus parasanguinis protein is UDP-N-acetylglucosamine--peptide N-acetylglucosaminyltransferase stabilizing protein GtfB.